The sequence spans 104 residues: DNA-directed RNA polymerase subunit omega (104 aa).

It belongs to the RNA polymerase subunit omega family. In terms of assembly, the RNAP catalytic core consists of 2 alpha, 1 beta, 1 beta' and 1 omega subunit. When a sigma factor is associated with the core the holoenzyme is formed, which can initiate transcription.

It catalyses the reaction RNA(n) + a ribonucleoside 5'-triphosphate = RNA(n+1) + diphosphate. Promotes RNA polymerase assembly. Latches the N- and C-terminal regions of the beta' subunit thereby facilitating its interaction with the beta and alpha subunits. The sequence is that of DNA-directed RNA polymerase subunit omega from Streptococcus suis (strain 05ZYH33).